We begin with the raw amino-acid sequence, 434 residues long: Anaerobic glycerol-3-phosphate dehydrogenase subunit B (434 aa).

The protein belongs to the anaerobic G-3-P dehydrogenase subunit B family. As to quaternary structure, composed of a catalytic GlpA/B dimer and of membrane bound GlpC. FMN is required as a cofactor.

The enzyme catalyses a quinone + sn-glycerol 3-phosphate = dihydroxyacetone phosphate + a quinol. It participates in polyol metabolism; glycerol degradation via glycerol kinase pathway; glycerone phosphate from sn-glycerol 3-phosphate (anaerobic route): step 1/1. Conversion of glycerol 3-phosphate to dihydroxyacetone. Uses fumarate or nitrate as electron acceptor. This chain is Anaerobic glycerol-3-phosphate dehydrogenase subunit B, found in Histophilus somni (strain 2336) (Haemophilus somnus).